Reading from the N-terminus, the 61-residue chain is Type IV secretion system protein PtlI homolog (61 aa).

The N-terminal stretch at 1–25 (MIHAHSNARLLRWAILAIAPATLGA) is a signal peptide. The interval 29–61 (NGPPGLPYPDGKPLIPINTAAPEQGSSCQTRAP) is disordered. Residues 52–61 (QGSSCQTRAP) show a composition bias toward polar residues.

This Bordetella bronchiseptica (strain ATCC BAA-588 / NCTC 13252 / RB50) (Alcaligenes bronchisepticus) protein is Type IV secretion system protein PtlI homolog (ptlI).